A 72-amino-acid polypeptide reads, in one-letter code: Small proline-rich protein 2B (72 aa).

Low complexity predominate over residues 1–11 (MSYQQQQCKQP). A disordered region spans residues 1 to 20 (MSYQQQQCKQPCQPPPVCPT). 3 tandem repeats follow at residues 21-29 (PKCPEPCPP), 30-38 (PKCPEPCPP), and 39-47 (PKCPQPCPP). The tract at residues 21–47 (PKCPEPCPPPKCPEPCPPPKCPQPCPP) is 3 X 9 AA tandem repeats of P-K-C-P-[EQ]-P-C-P-P. Residues 42-72 (PQPCPPQQCQQKYPPVTPSPPCQPKYPPKSK) are disordered. The span at 56 to 72 (PVTPSPPCQPKYPPKSK) shows a compositional bias: pro residues.

It belongs to the cornifin (SPRR) family. As to expression, suprabasal layers of squamous-differentiated tissues such as epidermis, esophagus, tongue and trachea.

Its subcellular location is the cytoplasm. Cross-linked envelope protein of keratinocytes. It is a keratinocyte protein that first appears in the cell cytosol, but ultimately becomes cross-linked to membrane proteins by transglutaminase. All that results in the formation of an insoluble envelope beneath the plasma membrane. The sequence is that of Small proline-rich protein 2B (SPRR2B) from Homo sapiens (Human).